Consider the following 44-residue polypeptide: Photosystem I reaction center subunit IX (44 aa).

A helical transmembrane segment spans residues 9–29 (WFRSAPVVATIWIVLTAGILV).

Belongs to the PsaJ family.

Its subcellular location is the cellular thylakoid membrane. May help in the organization of the PsaE and PsaF subunits. The chain is Photosystem I reaction center subunit IX from Prochlorococcus marinus (strain MIT 9211).